A 37-amino-acid polypeptide reads, in one-letter code: Ice-structuring protein 3 (37 aa).

Belongs to the type-I AFP family.

Contributes to protect fish blood from freezing at subzero sea water temperatures. Lowers the blood freezing point. Binds to nascent ice crystals and prevents further growth. The chain is Ice-structuring protein 3 from Pseudopleuronectes americanus (Winter flounder).